A 547-amino-acid polypeptide reads, in one-letter code: Chaperonin GroEL (547 aa).

ATP is bound by residues 30-33 (TLGP), K51, 87-91 (DGTTT), G415, 479-481 (NAA), and D495.

This sequence belongs to the chaperonin (HSP60) family. In terms of assembly, forms a cylinder of 14 subunits composed of two heptameric rings stacked back-to-back. Interacts with the co-chaperonin GroES.

Its subcellular location is the cytoplasm. It catalyses the reaction ATP + H2O + a folded polypeptide = ADP + phosphate + an unfolded polypeptide.. Its function is as follows. Together with its co-chaperonin GroES, plays an essential role in assisting protein folding. The GroEL-GroES system forms a nano-cage that allows encapsulation of the non-native substrate proteins and provides a physical environment optimized to promote and accelerate protein folding. The polypeptide is Chaperonin GroEL (Pseudomonas fluorescens (strain ATCC BAA-477 / NRRL B-23932 / Pf-5)).